Reading from the N-terminus, the 1794-residue chain is MATPRGQTVWFGNEFPNDDLKDLFRRLHQHSKDRRFRLLSVFLEESTAILKEEVANLPQQLQELVPHFDTACTLPEVDFRQGPLGAAMESALLTILELGMLIGHYEAEDIEWDLDPSRTILAGLSIGILAGAAVALSSSLADVAKVGAESVRVSFRLGVYVADISTKLEAPQSDGTLQSWAHVVTGMSHEAVQEELSQYNAVTQNPEITKVFVSAADKTSVSVTGPPSRIKAAFQHSPSLRYSKSLPLPVYDGLCHAAHLYSQDDIEIVINSAKSVIPTSRPVRLPLISSQTGKPFAAKTAGELFLEIGTELLTGTIFLDTVTAGILEHVKLQEPTGNYEIVSFRMSQVLNGILTAIETDFPELGRARRDMVSWVHGDYGARRPSSYAASKLAIVGMACRLPGGANDPELFWELLEQGRDTLTTVPPDRFDLNTHYDPTGKTENATQTPFGNFIDRPGYFDAGFFNMSPREAEQTDPMHRLALVTAYEAMEMAGMVPGRTPSTRPNRIGTFYGQASDDWRELNASQNISTYAVPGGERAFANGRINYFFKFSGPSYNIDTACSSGLAAVQAACSALWAGEADTVIAGGLNVITDPDNYAGLGNGHFLSKTGQCKVWDKDADGYCRADGIGSVVIKRLEDAEADNDNILAVILGARTNHSAEAVSITHPHAGAQKANYRQVLHQAGVNPLDVSYVELHGTGTQAGDAVESESVSDVFAPSTPRRRPDQRLYLGAVKSNIGHGEAAAGITSLLKALLVFQKNMIPKHIGIKTEINPIIPKDLERRHVGLAMENTPWPRPAGKKRLAVVNSFGAHGGNTTVLLEDAPERVKVSTQDDRTTHPVVISAKSKKSLQANIEKLLSWLDQNPDANLGDLSYTLCARRMHHSMRFGAAASGIAALQKTLRSWLDNPKASAELRAIPNDTPSVVLTFTGQGAYYSGMGRELLAEFSYFRTEVFQLDQIAQRLGFPSVVPVIDGSIDDGPASPVLTQLSVTVLEIALARFWSHLGIRISAVIGHSLGEYAAFAVAGVISATEALYLVGRRAQLTEERCTQGSHSMLSVRASEDDIEELIAGSPDTAELAYEVCCRNTPQDTVIGGTQESIDSIRQALEKNTIKCTQLDVPFAFHTAQMDPILDSLETLATPITFKAPSIPVLSPLLGSVVFDRKSIHAQYLRRATRETVDFVAAIEAAQDFGLVDAKTIWIDVGPHPICASLVRGIDSSASVISSCRRNEDNLATMSKSLVTLHLAGLTPCWAEYFRPREQEYSLLKLPTYSWNETDYWIPYIGTWTLDKALLKYGEKKAPLSLSMSRPSALRTSLVHQITTETVEATTATLHVLSDMQHPDFLEALHGHRMNNCGVATSSIWSDMAFTVGEYLYRRLVPQAKDVHMNLSDLEVLHAQVALEKKGSVQPLVLKAHLNLSTSSMSLAWFNASAETGECAAESFATCVVRFEDPAAWTREWDRLSHLVLGRIEALEQRAVEGKASKLSKPLAYTLFKNVVDYADRYRGMDQVVLYEHEAVAEVTLVAERHGTWHTPPHWIDSVSHLAGLVMNGSNASNTRDYFYVTPGCSSFRLLNPLKAGGKYRSYVRMFPLPEEANMYAGDVYILEGEQIVGMVGHIRFRRVPRLLMDRFFSPAAASHTEKQLQETAPSATNVKKSTPPPAEAPISVPVAPGNPVAIPLPTASKSQVATPPLTPPSQEDSPGESAVITPATSDRGDSTDAGVVGQCLKVMARETGLEVDALTPDASFVQLGIDSLMSLVLSEKFRAELGIEIKSSLFLECPTIGEMTAWLEEYC.

The tract at residues 19-256 is N-terminal acylcarrier protein transacylase domain (SAT); that stretch reads DLKDLFRRLH…PLPVYDGLCH (238 aa). The Ketosynthase family 3 (KS3) domain maps to 389 to 822; sequence ASKLAIVGMA…GGNTTVLLED (434 aa). The span at 428–440 shows a compositional bias: basic and acidic residues; that stretch reads DRFDLNTHYDPTG. The disordered stretch occupies residues 428 to 448; the sequence is DRFDLNTHYDPTGKTENATQT. Active-site for beta-ketoacyl synthase activity residues include cysteine 562, histidine 697, and histidine 740. Positions 927-1230 are malonyl-CoA:ACP transacylase (MAT) domain; the sequence is TFTGQGAYYS…SVISSCRRNE (304 aa). The product template (PT) domain stretch occupies residues 1314–1633; sequence TSLVHQITTE…RLLMDRFFSP (320 aa). The tract at residues 1318–1454 is N-terminal hotdog fold; sequence HQITTETVEA…CVVRFEDPAA (137 aa). The PKS/mFAS DH domain maps to 1318 to 1628; sequence HQITTETVEA…FRRVPRLLMD (311 aa). The active-site Proton acceptor; for dehydratase activity is the histidine 1350. The segment at 1482-1628 is C-terminal hotdog fold; it reads ASKLSKPLAY…FRRVPRLLMD (147 aa). Aspartate 1539 acts as the Proton donor; for dehydratase activity in catalysis. The tract at residues 1637–1719 is disordered; it reads SHTEKQLQET…ATSDRGDSTD (83 aa). The segment covering 1644–1655 has biased composition (polar residues); that stretch reads QETAPSATNVKK. In terms of domain architecture, Carrier spans 1717 to 1794; sequence STDAGVVGQC…EMTAWLEEYC (78 aa). Position 1754 is an O-(pantetheine 4'-phosphoryl)serine (serine 1754).

It depends on pantetheine 4'-phosphate as a cofactor.

It participates in secondary metabolite biosynthesis. Functionally, non-reducing polyketide synthase; part of the gene cluster that mediates the biosynthesis of neosartoricin, a prenylated anthracenone that exhibits T-cell antiproliferative activity, suggestive of a physiological role as an immunosuppressive agent. The non-reducing polyketide synthase nscA probably synthesizes and cyclizes the decaketide backbone. The hydrolase nscB then mediates the product release through hydrolysis followed by spontaneous decarboxylation. The prenyltransferase nscD catalyzes the addition of the dimethylallyl group to the aromatic C5. The FAD-dependent monooxygenase nscC is then responsible for the stereospecific hydroxylation at C2. There is no gene encoding O-acetyltransferase in the nsc gene cluster; thus, the last step of 2-O-acetylation leading to neosartoricin may be catalyzed by an unidentified O-acetyltransferase. In Aspergillus fumigatus (strain ATCC MYA-4609 / CBS 101355 / FGSC A1100 / Af293) (Neosartorya fumigata), this protein is Non-reducing polyketide synthase nscA.